The primary structure comprises 150 residues: Large ribosomal subunit protein bL9 (150 aa).

It belongs to the bacterial ribosomal protein bL9 family.

In terms of biological role, binds to the 23S rRNA. This Colwellia psychrerythraea (strain 34H / ATCC BAA-681) (Vibrio psychroerythus) protein is Large ribosomal subunit protein bL9.